Here is a 594-residue protein sequence, read N- to C-terminus: DNA polymerase epsilon subunit B (594 aa).

Belongs to the DNA polymerase epsilon subunit B family. As to quaternary structure, heterotetramer. Consists of four subunits: pol2, dpb2, dpb3 and dpb4. Interacts with dpb3.

The protein resides in the nucleus. In terms of biological role, as accessory component of the DNA polymerase epsilon (DNA polymerase II) participates in chromosomal DNA replication. The sequence is that of DNA polymerase epsilon subunit B (dpb2) from Schizosaccharomyces pombe (strain 972 / ATCC 24843) (Fission yeast).